The following is a 93-amino-acid chain: UPF0358 protein OB1428 (93 aa).

The protein belongs to the UPF0358 family.

The polypeptide is UPF0358 protein OB1428 (Oceanobacillus iheyensis (strain DSM 14371 / CIP 107618 / JCM 11309 / KCTC 3954 / HTE831)).